Reading from the N-terminus, the 183-residue chain is MNREQIANALRQNQVVAYPTEAVFGLGCNPQSESAVKKLLDLKQRPVEKGLILVAPSLDFFRPFVDFEQINDEQLSRLQGKYERPTTWIVPSKSTTPYFLTGKFDSIAVRLCDHPSVKALCELTGFALTSTSANLTGEPPCRIADEVRLQFGADFPVLDETVGDARNPSEIRDLRTNQLFRQG.

The YrdC-like domain occupies 1-183 (MNREQIANAL…LRTNQLFRQG (183 aa)).

This sequence belongs to the SUA5 family. TsaC subfamily.

It is found in the cytoplasm. The enzyme catalyses L-threonine + hydrogencarbonate + ATP = L-threonylcarbamoyladenylate + diphosphate + H2O. In terms of biological role, required for the formation of a threonylcarbamoyl group on adenosine at position 37 (t(6)A37) in tRNAs that read codons beginning with adenine. Catalyzes the conversion of L-threonine, HCO(3)(-)/CO(2) and ATP to give threonylcarbamoyl-AMP (TC-AMP) as the acyladenylate intermediate, with the release of diphosphate. This chain is Threonylcarbamoyl-AMP synthase, found in Haemophilus influenzae (strain PittEE).